A 489-amino-acid chain; its full sequence is Cytochrome P450 71A26 (489 aa).

Residues 1–21 (MMIMFFLLCSIIFVVTIIIFR) traverse the membrane as a helical segment. Cysteine 431 lines the heme pocket.

It belongs to the cytochrome P450 family. It depends on heme as a cofactor.

The protein localises to the membrane. This chain is Cytochrome P450 71A26 (CYP71A26), found in Arabidopsis thaliana (Mouse-ear cress).